A 24-amino-acid polypeptide reads, in one-letter code: Positive regulator of RepFIC repA1 expression (24 aa).

The protein is Positive regulator of RepFIC repA1 expression (repL) of Escherichia coli (strain K12).